A 124-amino-acid polypeptide reads, in one-letter code: Aspartate 1-decarboxylase (124 aa).

The active-site Schiff-base intermediate with substrate; via pyruvic acid is the S25. S25 is modified (pyruvic acid (Ser)). A substrate-binding site is contributed by T57. Residue Y58 is the Proton donor of the active site. 73 to 75 contacts substrate; that stretch reads GAA.

It belongs to the PanD family. As to quaternary structure, heterooctamer of four alpha and four beta subunits. Pyruvate serves as cofactor. Post-translationally, is synthesized initially as an inactive proenzyme, which is activated by self-cleavage at a specific serine bond to produce a beta-subunit with a hydroxyl group at its C-terminus and an alpha-subunit with a pyruvoyl group at its N-terminus.

The protein resides in the cytoplasm. The catalysed reaction is L-aspartate + H(+) = beta-alanine + CO2. The protein operates within cofactor biosynthesis; (R)-pantothenate biosynthesis; beta-alanine from L-aspartate: step 1/1. Functionally, catalyzes the pyruvoyl-dependent decarboxylation of aspartate to produce beta-alanine. This is Aspartate 1-decarboxylase from Clostridium botulinum (strain Alaska E43 / Type E3).